A 216-amino-acid chain; its full sequence is Protein-L-isoaspartate O-methyltransferase (216 aa).

Ser-63 is an active-site residue.

Belongs to the methyltransferase superfamily. L-isoaspartyl/D-aspartyl protein methyltransferase family.

It is found in the cytoplasm. It carries out the reaction [protein]-L-isoaspartate + S-adenosyl-L-methionine = [protein]-L-isoaspartate alpha-methyl ester + S-adenosyl-L-homocysteine. Its function is as follows. Catalyzes the methyl esterification of L-isoaspartyl residues in peptides and proteins that result from spontaneous decomposition of normal L-aspartyl and L-asparaginyl residues. It plays a role in the repair and/or degradation of damaged proteins. In Rhodopseudomonas palustris (strain BisB18), this protein is Protein-L-isoaspartate O-methyltransferase.